A 94-amino-acid chain; its full sequence is Putative pterin-4-alpha-carbinolamine dehydratase (94 aa).

Belongs to the pterin-4-alpha-carbinolamine dehydratase family.

The catalysed reaction is (4aS,6R)-4a-hydroxy-L-erythro-5,6,7,8-tetrahydrobiopterin = (6R)-L-erythro-6,7-dihydrobiopterin + H2O. In Caulobacter vibrioides (strain ATCC 19089 / CIP 103742 / CB 15) (Caulobacter crescentus), this protein is Putative pterin-4-alpha-carbinolamine dehydratase.